A 187-amino-acid chain; its full sequence is Meiotically up-regulated protein C1442.13c (187 aa).

2 disordered regions span residues 15–46 (QWENVEASPKPPPRKPKIVQPKKKPSKHLSNE) and 119–145 (IQEGSVSTNTKKRMDGHVVGSSAPAIN). A compositionally biased stretch (basic residues) spans 26-41 (PPRKPKIVQPKKKPSK). Residues 145–187 (NNGKGKQLLEMMGWSRGKGLGSENQGMVDPVVAVVKNNKQGLH) form the G-patch domain.

Its subcellular location is the nucleus. It localises to the cytoplasm. It is found in the cytoskeleton. The protein resides in the microtubule organizing center. The protein localises to the spindle pole body. Functionally, has a role in meiosis and sporulation. Required for meiotic chromosome segregation. The chain is Meiotically up-regulated protein C1442.13c from Schizosaccharomyces pombe (strain 972 / ATCC 24843) (Fission yeast).